A 366-amino-acid polypeptide reads, in one-letter code: tRNA/tmRNA (uracil-C(5))-methyltransferase (366 aa).

S-adenosyl-L-methionine contacts are provided by Gln189, Tyr217, Asn222, Glu238, and Asp298. Cys323 (nucleophile) is an active-site residue. Catalysis depends on Glu357, which acts as the Proton acceptor.

Belongs to the class I-like SAM-binding methyltransferase superfamily. RNA M5U methyltransferase family. TrmA subfamily.

It catalyses the reaction uridine(54) in tRNA + S-adenosyl-L-methionine = 5-methyluridine(54) in tRNA + S-adenosyl-L-homocysteine + H(+). The catalysed reaction is uridine(341) in tmRNA + S-adenosyl-L-methionine = 5-methyluridine(341) in tmRNA + S-adenosyl-L-homocysteine + H(+). In terms of biological role, dual-specificity methyltransferase that catalyzes the formation of 5-methyluridine at position 54 (m5U54) in all tRNAs, and that of position 341 (m5U341) in tmRNA (transfer-mRNA). The sequence is that of tRNA/tmRNA (uracil-C(5))-methyltransferase from Photorhabdus laumondii subsp. laumondii (strain DSM 15139 / CIP 105565 / TT01) (Photorhabdus luminescens subsp. laumondii).